The primary structure comprises 692 residues: MERLRQIASQATAASAAPARPAHPLDPLSTAEIKAATNTVKSYFAGKKISFNTVTLREPARKAYIQWKEQGGPLPPRLAYYVILEAGKPGVKEGLVDLASLSVIETRALETVQPILTVEDLCSTEEVIRNDPAVIEQCVLSGIPANEMHKVYCDPWTIGYDERWGTGKRLQQALVYYRSDEDDSQYSHPLDFCPIVDTEEKKVIFIDIPNRRRKVSKHKHANFYPKHMIEKVGAMRPEAPPINVTQPEGVSFKMTGNVMEWSNFKFHIGFNYREGIVLSDVSYNDHGNVRPIFHRISLSEMIVPYGSPEFPHQRKHALDIGEYGAGYMTNPLSLGCDCKGVIHYLDAHFSDRAGDPITVKNAVCIHEEDDGLLFKHSDFRDNFATSLVTRATKLVVSQIFTAANYEYCLYWVFMQDGAIRLDIRLTGILNTYILGDDEEAGPWGTRVYPNVNAHNHQHLFSLRIDPRIDGDGNSAAACDAKSSPYPLGSPENMYGNAFYSEKTTFKTVKDSLTNYESATGRSWDIFNPNKVNPYSGKPPSYKLVSTQCPPLLAKEGSLVAKRAPWASHSVNVVPYKDNRLYPSGDHVPQWSGDGVRGMREWIGDGSENIDNTDILFFHTFGITHFPAPEDFPLMPAEPITLMLRPRHFFTENPGLDIQPSYAMTTSEAKRAVHKETKDKTSRLAFEGSCCGK.

Residues 1 to 22 (MERLRQIASQATAASAAPARPA) show a composition bias toward low complexity. Positions 1 to 26 (MERLRQIASQATAASAAPARPAHPLD) are disordered. Asparagine 243 carries N-linked (GlcNAc...) asparagine glycosylation. 317–328 (ALDIGEYGAGYM) contributes to the substrate binding site. Aspartate 319 serves as the catalytic Proton acceptor. A disulfide bond links cysteine 338 and cysteine 364. Residue 402–407 (AANYEY) participates in substrate binding. Residue tyrosine 405 is the Schiff-base intermediate with substrate; via topaquinone of the active site. A 2',4',5'-topaquinone modification is found at tyrosine 405. Positions 456 and 458 each coordinate Cu cation. Mn(2+) contacts are provided by aspartate 465, aspartate 613, and isoleucine 614. Histidine 624 serves as a coordination point for Cu cation.

The protein belongs to the copper/topaquinone oxidase family. In terms of assembly, homodimer. The cofactor is Cu cation. Zn(2+) is required as a cofactor. L-topaquinone serves as cofactor. Requires Mn(2+) as cofactor. Post-translationally, topaquinone (TPQ) is generated by copper-dependent autoxidation of a specific tyrosyl residue.

It is found in the peroxisome. The catalysed reaction is a primary methyl amine + O2 + H2O = an aldehyde + H2O2 + NH4(+). This chain is Peroxisomal primary amine oxidase (AMO), found in Pichia angusta (Yeast).